We begin with the raw amino-acid sequence, 375 residues long: Muconate cycloisomerase 1 (375 aa).

The active-site Proton acceptor is the lysine 171. Residues aspartate 200, glutamate 226, and aspartate 251 each coordinate Mn(2+). The active-site Proton donor is the glutamate 329.

Belongs to the mandelate racemase/muconate lactonizing enzyme family. Homooctamer. It depends on Mn(2+) as a cofactor.

The catalysed reaction is (S)-muconolactone = cis,cis-muconate + H(+). The protein operates within aromatic compound metabolism; beta-ketoadipate pathway; 5-oxo-4,5-dihydro-2-furylacetate from catechol: step 2/3. Its function is as follows. Catalyzes a syn cycloisomerization. In Pseudomonas putida (Arthrobacter siderocapsulatus), this protein is Muconate cycloisomerase 1 (catB).